A 404-amino-acid chain; its full sequence is Zinc finger protein zfs1 (404 aa).

Positions 134–149 (SYLHSGSSPHGNTSNH) are enriched in polar residues. Disordered stretches follow at residues 134–168 (SYLH…TGSG) and 259–322 (SNAS…APNG). The span at 150–168 (PSPISSLESLPSRSSTGSG) shows a compositional bias: low complexity. The span at 259–283 (SNASIRNAPSNLSKQFSPSGNSPLT) shows a compositional bias: polar residues. Over residues 304 to 317 (GSASHPHGSGSSNG) the composition is skewed to low complexity. C3H1-type zinc fingers lie at residues 326-354 (LYKT…HGNQ) and 364-392 (KYKS…HDES).

In terms of assembly, interacts with moc3.

It is found in the cytoplasm. It localises to the nucleus. Functionally, binds to specific AU-rich elements (ARE) in the 3'-untranslated region of target mRNAs and promotes their degradation. Binds to ARE present in the arz1 mRNA and stimulates the rate of arz1 mRNA decay. Required for coordination of septum formation with exit from mitosis. Involved in the mating response pathway. Induces sexual development and ascus formation. This Schizosaccharomyces pombe (strain 972 / ATCC 24843) (Fission yeast) protein is Zinc finger protein zfs1 (zfs1).